A 141-amino-acid polypeptide reads, in one-letter code: Transcription antitermination protein NusB (141 aa).

It belongs to the NusB family.

Involved in transcription antitermination. Required for transcription of ribosomal RNA (rRNA) genes. Binds specifically to the boxA antiterminator sequence of the ribosomal RNA (rrn) operons. In Clostridium botulinum (strain Loch Maree / Type A3), this protein is Transcription antitermination protein NusB.